The following is a 322-amino-acid chain: Solute carrier family 25 member 16 (322 aa).

Solcar repeat units lie at residues 34–120, 128–219, and 241–322; these read FYWL…YKTF, SGHV…LKSV, and LKTH…AVAF.

This sequence belongs to the mitochondrial carrier (TC 2.A.29) family.

It localises to the mitochondrion inner membrane. Its function is as follows. May be involved in the transport of coenzyme A in the mitochondrial matrix. Very little is known about the physiological function of this carrier. This Rattus norvegicus (Rat) protein is Solute carrier family 25 member 16.